Reading from the N-terminus, the 505-residue chain is Pup deamidase/depupylase (505 aa).

6 to 10 (GTEVE) lines the ATP pocket. Mg(2+)-binding residues include Glu-8 and Tyr-93. Asp-95 (proton acceptor) is an active-site residue. Residue Glu-100 coordinates Mg(2+). 102–103 (SA) is a binding site for ATP. His-156 provides a ligand contact to Mg(2+). Residues Asn-158 and Arg-240 each coordinate ATP. His-242 provides a ligand contact to Mg(2+).

The protein belongs to the Pup ligase/Pup deamidase family. Pup deamidase subfamily. In terms of assembly, interacts with the prokaryotic ubiquitin-like protein Pup. ATP is required as a cofactor.

The enzyme catalyses [prokaryotic ubiquitin-like protein]-C-terminal-L-glutamine + H2O = [prokaryotic ubiquitin-like protein]-C-terminal-L-glutamate + NH4(+). The protein operates within protein degradation; proteasomal Pup-dependent pathway. Its function is as follows. Specifically catalyzes the deamidation of the C-terminal glutamine of the prokaryotic ubiquitin-like protein Pup to glutamate, thereby rendering Pup competent for conjugation. Also displays depupylase (DPUP) activity, removing conjugated Pup from target proteins; is thus involved in the recycling of Pup and may function similarly to deubiquitinases (DUBs) in eukaryotes to prevent or promote proteasomal degradation of certain proteins. This chain is Pup deamidase/depupylase (dop), found in Mycobacterium tuberculosis (strain CDC 1551 / Oshkosh).